We begin with the raw amino-acid sequence, 258 residues long: tRNA pseudouridine synthase A (258 aa).

Residue aspartate 52 is the Nucleophile of the active site. Position 110 (tyrosine 110) interacts with substrate.

Belongs to the tRNA pseudouridine synthase TruA family. As to quaternary structure, homodimer.

The catalysed reaction is uridine(38/39/40) in tRNA = pseudouridine(38/39/40) in tRNA. Its function is as follows. Formation of pseudouridine at positions 38, 39 and 40 in the anticodon stem and loop of transfer RNAs. This Francisella tularensis subsp. mediasiatica (strain FSC147) protein is tRNA pseudouridine synthase A.